The chain runs to 203 residues: MSKIIIATANKGKAKEFEKIFAKFNIEVATLADFPEIGEIEETGTTFAENAALKAETVASLLNQTVIADDSGLIVDVLNGAPGVYSARYAGVAHDDAKNNEKLLKNLEGVEPAKRTARFHCTLAVATPSEKTSFYTGEVEGVIAEQLCGTNGFGYDPLFFLPEFGLTMAEIPAEKKNEISHRANAIKQLEKDLAEVVEKVTKK.

8–13 (TANKGK) is a substrate binding site. Mg(2+) contacts are provided by Glu-41 and Asp-70. Asp-70 acts as the Proton acceptor in catalysis. Residues Ser-71, 153–156 (FGYD), Lys-176, and 181–182 (HR) contribute to the substrate site.

It belongs to the HAM1 NTPase family. Homodimer. Mg(2+) is required as a cofactor.

The catalysed reaction is XTP + H2O = XMP + diphosphate + H(+). The enzyme catalyses dITP + H2O = dIMP + diphosphate + H(+). It carries out the reaction ITP + H2O = IMP + diphosphate + H(+). In terms of biological role, pyrophosphatase that catalyzes the hydrolysis of nucleoside triphosphates to their monophosphate derivatives, with a high preference for the non-canonical purine nucleotides XTP (xanthosine triphosphate), dITP (deoxyinosine triphosphate) and ITP. Seems to function as a house-cleaning enzyme that removes non-canonical purine nucleotides from the nucleotide pool, thus preventing their incorporation into DNA/RNA and avoiding chromosomal lesions. The protein is dITP/XTP pyrophosphatase of Listeria innocua serovar 6a (strain ATCC BAA-680 / CLIP 11262).